The primary structure comprises 64 residues: Large ribosomal subunit protein bL35 (64 aa).

Residues 1 to 27 (MPKMKTKSGAKKRFKPTASGFKHKHAF) are disordered.

This sequence belongs to the bacterial ribosomal protein bL35 family.

In Azotobacter vinelandii (strain DJ / ATCC BAA-1303), this protein is Large ribosomal subunit protein bL35.